A 232-amino-acid polypeptide reads, in one-letter code: Orotidine 5'-phosphate decarboxylase (232 aa).

Substrate-binding positions include Asp13, Lys35, 62–71, Thr122, Arg182, Gln191, Gly211, and Arg212; that span reads DLKFHDIPNT. The Proton donor role is filled by Lys64.

Belongs to the OMP decarboxylase family. Type 1 subfamily. In terms of assembly, homodimer.

It catalyses the reaction orotidine 5'-phosphate + H(+) = UMP + CO2. It participates in pyrimidine metabolism; UMP biosynthesis via de novo pathway; UMP from orotate: step 2/2. Catalyzes the decarboxylation of orotidine 5'-monophosphate (OMP) to uridine 5'-monophosphate (UMP). This is Orotidine 5'-phosphate decarboxylase from Pseudomonas aeruginosa (strain LESB58).